The chain runs to 210 residues: Thymidylate kinase (210 aa).

Position 11-18 (11-18 (GLEGAGKS)) interacts with ATP.

Belongs to the thymidylate kinase family.

It carries out the reaction dTMP + ATP = dTDP + ADP. Phosphorylation of dTMP to form dTDP in both de novo and salvage pathways of dTTP synthesis. This Vibrio parahaemolyticus serotype O3:K6 (strain RIMD 2210633) protein is Thymidylate kinase.